The chain runs to 751 residues: Fusarisetin A cluster transcription factor fsa6 (751 aa).

A disordered region spans residues 1-35; the sequence is MADQAQDVRPTEWGPGKTPQGRARLPSSRPREKPQ. A DNA-binding region (zn(2)-C6 fungal-type) is located at residues 38–66; it reads CNLCRRRKLRCDRQRPCSSCAQRELGLSC. Positions 107-116 are enriched in polar residues; it reads NVNAQDQVGA. The segment at 107–153 is disordered; sequence NVNAQDQVGATPSPRGQPRGPDYPTPAAVHAPSTNEEPVSAAVSPAD.

The protein localises to the nucleus. Functionally, transcription factor that regulates the expression of the gene cluster that mediates the biosynthesis of fusarisetin A. The protein is Fusarisetin A cluster transcription factor fsa6 of Fusarium sp. (strain FN080326).